The primary structure comprises 394 residues: 5-azacytidine-induced protein 2 (394 aa).

Residues 1–197 (MDALVEDDIC…IELRKAKQTD (197 aa)) form a homodimerization region. 2 coiled-coil regions span residues 40 to 76 (ALVTAYEDIKKRLKDSEKENSLLKKRIRFLEEKLIAR) and 102 to 196 (DRDN…AKQT). The tract at residues 216–257 (SDNMQHAYWELKREMSNLHLVTQVQAELLRKLKTSTAIKKAC) is interaction with TBK1 and IKBKE. Phosphoserine is present on residues S318 and S355. The interval 355 to 379 (SPPKSSETAFGETKSKTLPLPNLPP) is disordered.

Homodimer. Interacts with IKBKE, TBK1 and TICAM1. Interacts with TAX1BP1. Interacts with CALCOCO2. In terms of processing, ubiquitinated via 'Lys-48'-linked polyubiquitination by TRIM38, leading to its degradation.

It localises to the cytoplasm. Its function is as follows. Adapter protein which binds TBK1 and IKBKE playing a role in antiviral innate immunity. Activates serine/threonine-protein kinase TBK1 and facilitates its oligomerization. Enhances the phosphorylation of NF-kappa-B p65 subunit RELA by TBK1. Promotes TBK1-induced as well as TNF-alpha or PMA-induced activation of NF-kappa-B. Participates in IFNB promoter activation via TICAM1. This chain is 5-azacytidine-induced protein 2 (AZI2), found in Macaca fascicularis (Crab-eating macaque).